A 436-amino-acid polypeptide reads, in one-letter code: GTPase Der (436 aa).

EngA-type G domains follow at residues 4 to 167 (PVVA…PKDH) and 176 to 351 (IKFC…DNHA). GTP is bound by residues 10–17 (GRPNVGKS), 57–61 (DTGGI), 119–122 (NKID), 182–189 (GRPNVGKS), 229–233 (DTAGM), and 294–297 (NKWD). The KH-like domain occupies 352-436 (MRVQTNVLNE…PIKIIARPRK (85 aa)).

Belongs to the TRAFAC class TrmE-Era-EngA-EngB-Septin-like GTPase superfamily. EngA (Der) GTPase family. As to quaternary structure, associates with the 50S ribosomal subunit.

GTPase that plays an essential role in the late steps of ribosome biogenesis. This Geobacillus thermodenitrificans (strain NG80-2) protein is GTPase Der.